The primary structure comprises 347 residues: RNA 3'-terminal phosphate cyclase (347 aa).

ATP contacts are provided by residues glutamine 109 and 290-294; that span reads YLADQ. Histidine 315 (tele-AMP-histidine intermediate) is an active-site residue.

Belongs to the RNA 3'-terminal cyclase family. Type 1 subfamily.

The protein localises to the cytoplasm. It carries out the reaction a 3'-end 3'-phospho-ribonucleotide-RNA + ATP = a 3'-end 2',3'-cyclophospho-ribonucleotide-RNA + AMP + diphosphate. In terms of biological role, catalyzes the conversion of 3'-phosphate to a 2',3'-cyclic phosphodiester at the end of RNA. The mechanism of action of the enzyme occurs in 3 steps: (A) adenylation of the enzyme by ATP; (B) transfer of adenylate to an RNA-N3'P to produce RNA-N3'PP5'A; (C) and attack of the adjacent 2'-hydroxyl on the 3'-phosphorus in the diester linkage to produce the cyclic end product. The biological role of this enzyme is unknown but it is likely to function in some aspects of cellular RNA processing. The polypeptide is RNA 3'-terminal phosphate cyclase (Ralstonia nicotianae (strain ATCC BAA-1114 / GMI1000) (Ralstonia solanacearum)).